Consider the following 321-residue polypeptide: Cytochrome c biogenesis protein CcsA (321 aa).

The next 8 helical transmembrane spans lie at Ile-9–Leu-29, Gly-44–Gly-64, Leu-71–Phe-91, Leu-97–Leu-117, Met-143–Ile-163, Val-227–Asn-247, Thr-261–His-275, and Ala-288–Leu-308.

It belongs to the CcmF/CycK/Ccl1/NrfE/CcsA family. In terms of assembly, may interact with Ccs1.

It localises to the plastid. The protein resides in the chloroplast thylakoid membrane. Functionally, required during biogenesis of c-type cytochromes (cytochrome c6 and cytochrome f) at the step of heme attachment. The chain is Cytochrome c biogenesis protein CcsA from Nandina domestica (Heavenly bamboo).